Here is a 623-residue protein sequence, read N- to C-terminus: MESYHKPDQQKLQALKDTANRLRISSIQATTAAGSGHPTSCCSAAEIMAVLFFHTMRYKSQDPRNPHNDRFVLSKGHAAPILYAVWAEAGFLAEAELLNLRKISSDLDGHPVPKQAFTDVATGSLGQGLGAACGMAYTGKYFDKASYRVYCLLGDGELSEGSVWEAMAFASIYKLDNLVAILDINRLGQSDPAPLQHQMDIYQKRCEAFGWHAIIVDGHSVEELCKAFGQAKHQPTAIIAKTFKGRGITGVEDKESWHGKPLPKNMAEQIIQEIYSQIQSKKKILATPPQEDAPSVDIANIRMPSLPSYKVGDKIATRKAYGQALAKLGHASDRIIALDGDTKNSTFSEIFKKEHPDRFIECYIAEQNMVSIAVGCATRNRTVPFCSTFAAFFTRAFDQIRMAAISESNINLCGSHCGVSIGEDGPSQMALEDLAMFRSVPTSTVFYPSDGVATEKAVELAANTKGICFIRTSRPENAIIYNNNEDFQVGQAKVVLKSKDDQVTVIGAGVTLHEALAAAELLKKEKINIRVLDPFTIKPLDRKLILDSARATKGRILTVEDHYYEGGIGEAVSSAVVGEPGITVTHLAVNRVPRSGKPAELLKMFGIDRDAIAQAVRGLITKA.

At M1 the chain carries N-acetylmethionine. S3 bears the Phosphoserine mark. Residues K6 and K11 each carry the N6-acetyllysine modification. H37 serves as a coordination point for substrate. Thiamine diphosphate-binding residues include S40 and H77. Residue S104 is modified to Phosphoserine. Residue 123-125 participates in thiamine diphosphate binding; it reads GSL. K144 is modified (N6-acetyllysine). D155 lines the Mg(2+) pocket. Residues G156 and N185 each contribute to the thiamine diphosphate site. Mg(2+) contacts are provided by N185 and L187. An N6-acetyllysine mark is found at K204, K232, and K241. Thiamine diphosphate is bound by residues K244 and H258. Residue H258 participates in substrate binding. An N6-acetyllysine modification is found at K260. Y275 carries the post-translational modification Phosphotyrosine. Residue T287 is modified to Phosphothreonine. S295 is modified (phosphoserine). Residues R318 and S345 each coordinate substrate. The residue at position 345 (S345) is a Phosphoserine. A Glycyl lysine isopeptide (Lys-Gly) (interchain with G-Cter in SUMO2) cross-link involves residue K352. Catalysis depends on E366, which acts as the Proton donor. F392 contributes to the thiamine diphosphate binding site. Substrate-binding residues include H416 and D424. Q428 contributes to the thiamine diphosphate binding site. Substrate is bound at residue R474. 2 positions are modified to N6-acetyllysine: K538 and K603.

The protein belongs to the transketolase family. Homodimer. Mg(2+) is required as a cofactor. It depends on Ca(2+) as a cofactor. The cofactor is Mn(2+). Co(2+) serves as cofactor. Requires thiamine diphosphate as cofactor.

It carries out the reaction D-sedoheptulose 7-phosphate + D-glyceraldehyde 3-phosphate = aldehydo-D-ribose 5-phosphate + D-xylulose 5-phosphate. Its function is as follows. Catalyzes the transfer of a two-carbon ketol group from a ketose donor to an aldose acceptor, via a covalent intermediate with the cofactor thiamine pyrophosphate. In Homo sapiens (Human), this protein is Transketolase (TKT).